We begin with the raw amino-acid sequence, 292 residues long: GTP cyclohydrolase FolE2 (292 aa).

This sequence belongs to the GTP cyclohydrolase IV family.

The catalysed reaction is GTP + H2O = 7,8-dihydroneopterin 3'-triphosphate + formate + H(+). It participates in cofactor biosynthesis; 7,8-dihydroneopterin triphosphate biosynthesis; 7,8-dihydroneopterin triphosphate from GTP: step 1/1. Functionally, converts GTP to 7,8-dihydroneopterin triphosphate. The polypeptide is GTP cyclohydrolase FolE2 (Staphylococcus aureus (strain Mu50 / ATCC 700699)).